A 346-amino-acid polypeptide reads, in one-letter code: Anthranilate phosphoribosyltransferase (346 aa).

5-phospho-alpha-D-ribose 1-diphosphate contacts are provided by residues Gly-81, 84–85, 91–94, 109–117, and Ser-121; these read GD, NVST, and KHGGRSVSS. Gly-81 is a binding site for anthranilate. Ser-93 contacts Mg(2+). Arg-167 provides a ligand contact to anthranilate. Mg(2+) is bound by residues Asp-226 and Glu-227.

The protein belongs to the anthranilate phosphoribosyltransferase family. As to quaternary structure, homodimer. Mg(2+) is required as a cofactor.

It carries out the reaction N-(5-phospho-beta-D-ribosyl)anthranilate + diphosphate = 5-phospho-alpha-D-ribose 1-diphosphate + anthranilate. Its pathway is amino-acid biosynthesis; L-tryptophan biosynthesis; L-tryptophan from chorismate: step 2/5. Functionally, catalyzes the transfer of the phosphoribosyl group of 5-phosphorylribose-1-pyrophosphate (PRPP) to anthranilate to yield N-(5'-phosphoribosyl)-anthranilate (PRA). The sequence is that of Anthranilate phosphoribosyltransferase from Marinomonas sp. (strain MWYL1).